The chain runs to 110 residues: Phosphoribosyl-ATP pyrophosphatase (110 aa).

It belongs to the PRA-PH family.

The protein resides in the cytoplasm. It catalyses the reaction 1-(5-phospho-beta-D-ribosyl)-ATP + H2O = 1-(5-phospho-beta-D-ribosyl)-5'-AMP + diphosphate + H(+). It functions in the pathway amino-acid biosynthesis; L-histidine biosynthesis; L-histidine from 5-phospho-alpha-D-ribose 1-diphosphate: step 2/9. The sequence is that of Phosphoribosyl-ATP pyrophosphatase from Lacticaseibacillus casei (strain BL23) (Lactobacillus casei).